The following is a 273-amino-acid chain: Undecaprenyl-diphosphatase (273 aa).

6 helical membrane-spanning segments follow: residues L46 to Y63, F83 to K103, L109 to V129, A184 to L204, A218 to L238, and F249 to V269.

Belongs to the UppP family.

The protein localises to the cell inner membrane. It catalyses the reaction di-trans,octa-cis-undecaprenyl diphosphate + H2O = di-trans,octa-cis-undecaprenyl phosphate + phosphate + H(+). Functionally, catalyzes the dephosphorylation of undecaprenyl diphosphate (UPP). Confers resistance to bacitracin. This Methylococcus capsulatus (strain ATCC 33009 / NCIMB 11132 / Bath) protein is Undecaprenyl-diphosphatase.